Consider the following 41-residue polypeptide: Giant hemoglobin AI chain (41 aa).

Residues 2–41 (DCGMLQRIKVKQQWASVYSSGIAREDFGEAIWKAVFALAP) enclose the Globin domain.

This sequence belongs to the globin family. Giant hemoglobin is composed of four heme-containing chains (AI to AIV), and two linker chains (AV and AVI).

This Lamellibrachia sp. (Deep-sea giant tube worm) protein is Giant hemoglobin AI chain.